A 207-amino-acid polypeptide reads, in one-letter code: MTLPDFRLIRLLPLASLVLTACTLPGHKGPGKSPDSPQWRQHQQEVRHLNQYQTRGAFAYISDDQKVYARFFWQQTGQDRYRLLLTNPLGSTELELNAQPGNVQLVDNKGQRYTADDAEEMIGKLTGMPIPLNSLRQWILGLPGDATDYKLDDQYRLSEVNYRQDGKNWKVVYGGYDSKTQPAMPANMELSDGSQRIKLKMDNWIVK.

The N-terminal stretch at Met-1–Ala-21 is a signal peptide. Residue Cys-22 is the site of N-palmitoyl cysteine attachment. Cys-22 is lipidated: S-diacylglycerol cysteine.

It belongs to the LolB family. Monomer.

The protein localises to the cell outer membrane. Its function is as follows. Plays a critical role in the incorporation of lipoproteins in the outer membrane after they are released by the LolA protein. The protein is Outer-membrane lipoprotein LolB of Salmonella agona (strain SL483).